Reading from the N-terminus, the 106-residue chain is Large ribosomal subunit protein cL38 (106 aa).

The N-terminal 39 residues, 1 to 39 (MSVSAIFGTGIVTVAASPVLRQFQVPKLGNGGGLGMVIE), are a transit peptide targeting the chloroplast. The disordered stretch occupies residues 42–70 (SRPQKKSTAHHRKTRPKKTQPWDIKRKPT). Residues 44–59 (PQKKSTAHHRKTRPKK) show a composition bias toward basic residues.

It belongs to the chloroplast-specific ribosomal protein cL38 family. Part of the 50S ribosomal subunit.

The protein resides in the plastid. The protein localises to the chloroplast. The sequence is that of Large ribosomal subunit protein cL38 (PSRP6) from Arabidopsis thaliana (Mouse-ear cress).